We begin with the raw amino-acid sequence, 367 residues long: UDP-N-acetylglucosamine--N-acetylmuramyl-(pentapeptide) pyrophosphoryl-undecaprenol N-acetylglucosamine transferase (367 aa).

Residues 18–20, Asn-130, Arg-170, Ser-196, Ile-252, 271–276, and Gln-297 contribute to the UDP-N-acetyl-alpha-D-glucosamine site; these read TGG and ALTVSE.

The protein belongs to the glycosyltransferase 28 family. MurG subfamily.

It localises to the cell inner membrane. The enzyme catalyses di-trans,octa-cis-undecaprenyl diphospho-N-acetyl-alpha-D-muramoyl-L-alanyl-D-glutamyl-meso-2,6-diaminopimeloyl-D-alanyl-D-alanine + UDP-N-acetyl-alpha-D-glucosamine = di-trans,octa-cis-undecaprenyl diphospho-[N-acetyl-alpha-D-glucosaminyl-(1-&gt;4)]-N-acetyl-alpha-D-muramoyl-L-alanyl-D-glutamyl-meso-2,6-diaminopimeloyl-D-alanyl-D-alanine + UDP + H(+). The protein operates within cell wall biogenesis; peptidoglycan biosynthesis. In terms of biological role, cell wall formation. Catalyzes the transfer of a GlcNAc subunit on undecaprenyl-pyrophosphoryl-MurNAc-pentapeptide (lipid intermediate I) to form undecaprenyl-pyrophosphoryl-MurNAc-(pentapeptide)GlcNAc (lipid intermediate II). The protein is UDP-N-acetylglucosamine--N-acetylmuramyl-(pentapeptide) pyrophosphoryl-undecaprenol N-acetylglucosamine transferase of Shewanella frigidimarina (strain NCIMB 400).